Reading from the N-terminus, the 679-residue chain is NADPH--cytochrome P450 reductase (679 aa).

The Lumenal segment spans residues 1-21 (MASEQTIDGAAAIPSGGGDEP). Residues 22 to 42 (FLGLLDVALLAVLIGGAAFYF) traverse the membrane as a helical segment. Over 43–679 (LRSRKKEEEP…QKRYSADVWS (637 aa)) the chain is Cytoplasmic. In terms of domain architecture, Flavodoxin-like spans 84–228 (LVVFYGSQTG…DFITWKDRFW (145 aa)). FMN contacts are provided by residues 90–95 (SQTGTG), 142–145 (ATYG), 177–186 (LGNKTYEHYN), and Asp-212. The FAD-binding FR-type domain maps to 283–523 (KNPFLAPIKV…FIRKSQFRLP (241 aa)). Arg-302 contributes to the NADP(+) binding site. FAD-binding positions include 458 to 461 (RYYS), 476 to 478 (TAV), Tyr-482, and 492 to 495 (GVAT). NADP(+)-binding positions include Thr-537, 597–598 (SR), 603–607 (KVYVQ), and Asp-640. Trp-678 is a binding site for FAD.

The protein belongs to the NADPH--cytochrome P450 reductase family. It in the N-terminal section; belongs to the flavodoxin family. This sequence in the C-terminal section; belongs to the flavoprotein pyridine nucleotide cytochrome reductase family. As to quaternary structure, interacts with sturkopf. FAD is required as a cofactor. FMN serves as cofactor. As to expression, high in antennae.

The protein resides in the endoplasmic reticulum membrane. It catalyses the reaction 2 oxidized [cytochrome P450] + NADPH = 2 reduced [cytochrome P450] + NADP(+) + H(+). Its function is as follows. This enzyme is required for electron transfer from NADP to cytochrome p450 in microsomes. It can also provide electron transfer to heme oxygenase and cytochrome b5. May function to clear the olfactory organ (antennae) from accumulating chemicals. The polypeptide is NADPH--cytochrome P450 reductase (Cpr) (Drosophila melanogaster (Fruit fly)).